The sequence spans 362 residues: MAHARVLLLALAVLATAAVAVASSSSFADSNPIRPVTDRAASTLESAVLGALGRTRHALRFARFAVRYGKSYESAAEVRRRFRIFSESLEEVRSTNRKGLPYRLGINRFSDMSWEEFQATRLGAAQTCSATLAGNHLMRDAAALPETKDWREDGIVSPVKNQAHCGSCWTFSTTGALEAAYTQATGKNISLSEQQLVDCAGGFNNFGCNGGLPSQAFEYIKYNGGIDTEESYPYKGVNGVCHYKAENAAVQVLDSVNITLNAEDELKNAVGLVRPVSVAFQVIDGFRQYKSGVYTSDHCGTTPDDVNHAVLAVGYGVENGVPYWLIKNSWGADWGDNGYFKMEMGKNMCAIATCASYPVVAA.

Residues 1 to 22 form the signal peptide; it reads MAHARVLLLALAVLATAAVAVA. Positions 23–143 are cleaved as a propeptide — activation peptide; the sequence is SSSSFADSNP…GNHLMRDAAA (121 aa). 2 cysteine pairs are disulfide-bonded: cysteine 165–cysteine 208 and cysteine 199–cysteine 241. Cysteine 168 is a catalytic residue. Asparagine 188 is a glycosylation site (N-linked (GlcNAc...) asparagine). Asparagine 257 carries an N-linked (GlcNAc...) asparagine glycan. A disulfide bond links cysteine 299 and cysteine 349. Catalysis depends on residues histidine 308 and asparagine 328.

The protein belongs to the peptidase C1 family.

Its subcellular location is the vacuole. It catalyses the reaction Hydrolysis of proteins, acting as an aminopeptidase (notably, cleaving Arg-|-Xaa bonds) as well as an endopeptidase.. In terms of biological role, may play a role in proteolysis leading to mobilization of nitrogen during senescence and starvation. This Hordeum vulgare (Barley) protein is Thiol protease aleurain.